Here is a 467-residue protein sequence, read N- to C-terminus: Argininosuccinate lyase (467 aa).

It belongs to the lyase 1 family. Argininosuccinate lyase subfamily.

Its subcellular location is the cytoplasm. It catalyses the reaction 2-(N(omega)-L-arginino)succinate = fumarate + L-arginine. It functions in the pathway amino-acid biosynthesis; L-arginine biosynthesis; L-arginine from L-ornithine and carbamoyl phosphate: step 3/3. The protein is Argininosuccinate lyase of Sinorhizobium fredii (strain NBRC 101917 / NGR234).